The primary structure comprises 562 residues: Alpha-amylase 2 (562 aa).

Position 236 (Asn-236) interacts with Ca(2+). Asp-309 acts as the Nucleophile in catalysis. Glu-338 serves as the catalytic Proton donor.

Belongs to the glycosyl hydrolase 13 family. Monomer. Requires Ca(2+) as cofactor.

It localises to the cytoplasm. The catalysed reaction is Endohydrolysis of (1-&gt;4)-alpha-D-glucosidic linkages in polysaccharides containing three or more (1-&gt;4)-alpha-linked D-glucose units.. In Dictyoglomus thermophilum (strain ATCC 35947 / DSM 3960 / H-6-12), this protein is Alpha-amylase 2 (amyB).